The sequence spans 188 residues: Ribosome-recycling factor (188 aa).

The protein belongs to the RRF family.

Its subcellular location is the cytoplasm. Its function is as follows. Responsible for the release of ribosomes from messenger RNA at the termination of protein biosynthesis. May increase the efficiency of translation by recycling ribosomes from one round of translation to another. This chain is Ribosome-recycling factor, found in Acidiphilium cryptum (strain JF-5).